The chain runs to 369 residues: N-methyltransferase imqF (369 aa).

This sequence belongs to the methyltransferase superfamily.

It participates in secondary metabolite biosynthesis. In terms of biological role, N-methyltransferase; part of the gene cluster that mediates the biosynthesis of imizoquins A to D, tripeptide-derived alkaloids that serve a protective role against oxidative stress that are essential for normal germination. ImqB is a canonical three-module NRPS that assembles the tripeptide backbone of the imizoquins via condensation of Trp, Tyr, and Leu-derived precursors. N-methylation by imqF and phenol oxidation by imqC, followed by cyclization via the FAD-dependent oxidase imqH carry out the three-step transformation of L-tyrosine into tetrahydroisoquinoline. Importantly, this sequence requires the presence of a free amine in the tyrosine moiety, indicating that isoquinoline formation occurs prior to peptide bond formation. The imidazolidin-4-one ring of imizoquins could form following additional oxidation of the methyl-derived bridgehead carbon by imqH. Lastly, O-methylation by imqG and leucine hydroxylation by imqE complete biosynthesis of the imizoquins. This Aspergillus flavus (strain ATCC 200026 / FGSC A1120 / IAM 13836 / NRRL 3357 / JCM 12722 / SRRC 167) protein is N-methyltransferase imqF.